The primary structure comprises 242 residues: MEPKYQRILIKLSGEALAGEKGAGIDIPTVQAIAKEIAEVHVSGVQIALVIGGGNLWRGEPAADAGMDRVQADYTGMLGTVMNALVMADSLQHYGVDTRVQTAIPMQNVAEPYIRGRALRHLEKNRIVVFGAGIGSPYFSTDTTAALRAAEIEADAILMAKNGVDGVYNADPKKDANAVKFDELTHGEVIKRGLKIMDATASTLSMDNDIDLVVFNMNEAGNIQRVVFGEHIGTTVSNKVCD.

An ATP-binding site is contributed by 11–14 (KLSG). The involved in allosteric activation by GTP stretch occupies residues 19–24 (GEKGAG). G53 contacts UMP. 2 residues coordinate ATP: G54 and R58. UMP contacts are provided by residues D73 and 134 to 141 (IGSPYFST). The ATP site is built by N162, Y168, and D171.

Belongs to the UMP kinase family. In terms of assembly, homohexamer.

The protein resides in the cytoplasm. It carries out the reaction UMP + ATP = UDP + ADP. The protein operates within pyrimidine metabolism; CTP biosynthesis via de novo pathway; UDP from UMP (UMPK route): step 1/1. With respect to regulation, allosterically activated by GTP. Inhibited by UTP. Catalyzes the reversible phosphorylation of UMP to UDP. This Streptococcus pyogenes serotype M2 (strain MGAS10270) protein is Uridylate kinase.